The chain runs to 575 residues: Proline--tRNA ligase (575 aa).

The protein belongs to the class-II aminoacyl-tRNA synthetase family. ProS type 1 subfamily. In terms of assembly, homodimer.

It localises to the cytoplasm. It carries out the reaction tRNA(Pro) + L-proline + ATP = L-prolyl-tRNA(Pro) + AMP + diphosphate. Catalyzes the attachment of proline to tRNA(Pro) in a two-step reaction: proline is first activated by ATP to form Pro-AMP and then transferred to the acceptor end of tRNA(Pro). As ProRS can inadvertently accommodate and process non-cognate amino acids such as alanine and cysteine, to avoid such errors it has two additional distinct editing activities against alanine. One activity is designated as 'pretransfer' editing and involves the tRNA(Pro)-independent hydrolysis of activated Ala-AMP. The other activity is designated 'posttransfer' editing and involves deacylation of mischarged Ala-tRNA(Pro). The misacylated Cys-tRNA(Pro) is not edited by ProRS. This chain is Proline--tRNA ligase, found in Anaeromyxobacter sp. (strain Fw109-5).